The following is a 119-amino-acid chain: Ribonuclease P protein component (119 aa).

This sequence belongs to the RnpA family. In terms of assembly, consists of a catalytic RNA component (M1 or rnpB) and a protein subunit.

It catalyses the reaction Endonucleolytic cleavage of RNA, removing 5'-extranucleotides from tRNA precursor.. Its function is as follows. RNaseP catalyzes the removal of the 5'-leader sequence from pre-tRNA to produce the mature 5'-terminus. It can also cleave other RNA substrates such as 4.5S RNA. The protein component plays an auxiliary but essential role in vivo by binding to the 5'-leader sequence and broadening the substrate specificity of the ribozyme. The sequence is that of Ribonuclease P protein component from Syntrophomonas wolfei subsp. wolfei (strain DSM 2245B / Goettingen).